The primary structure comprises 155 residues: NADH-ubiquinone oxidoreductase chain 6 (155 aa).

The next 4 helical transmembrane spans lie at 1–21 (MLGSIVVISMFMLLMNHPLAF), 42–62 (WISLILFLIFLGGILVMFIYV), 71–91 (FAVDLTSFMWVVPTIVLSFLV), and 121–141 (LTMLAYSFMVVYLFLALLLVI).

The protein belongs to the complex I subunit 6 family.

It is found in the mitochondrion membrane. It catalyses the reaction a ubiquinone + NADH + 5 H(+)(in) = a ubiquinol + NAD(+) + 4 H(+)(out). Core subunit of the mitochondrial membrane respiratory chain NADH dehydrogenase (Complex I) that is believed to belong to the minimal assembly required for catalysis. Complex I functions in the transfer of electrons from NADH to the respiratory chain. The immediate electron acceptor for the enzyme is believed to be ubiquinone. The polypeptide is NADH-ubiquinone oxidoreductase chain 6 (ND6) (Artemia franciscana (Brine shrimp)).